Here is a 661-residue protein sequence, read N- to C-terminus: MAAGETQLYAKVSNKLKSRSSPSLLEPLLAMGFPVHTALKALAATGRKTAEEALAWLHDHCNDPSLDDPIPQEYALFLCPTGPLLEKLQEFWRESKRQCAKNRAHEVFPHVTLCDFFTCEDQKVECLYEALKRAGDRLLGSFPTAVPLALHSSISYLGFFVSGSPADVIREFAMTFATEASLLAGTSVSRFWIFSQVPGHGPNLRLSNLTRASFVSHYILQKYCSVKPCTKQLHLTLAHKFYPHHQRTLEQLARAIPLGHSCQWTAALYSRDMRFVHYQTLRALFQYKPQNVDELTLSPGDYIFVDPTQQDEASEGWVIGISQRTGCRGFLPENYTDRASESDTWVKHRMYTFSLATDLNSRKDGEASSRCSGEFLPQTARSLSSLQALQATVARKSVLVVRHGERVDQIFGKAWLQQCSTPDGKYYRPDLNFPCSLPRRSRGIKDFENDPPLSSCGIFQSRIAGDALLDSGIRISSVFASPALRCVQTAKLILEELKLEKKIKIRVEPGIFEWTKWEAGKTTPTLMSLEELKEANFNIDTDYRPAFPLSALMPAESYQEYMDRCTASMVQIVNTCPQDTGVILIVSHGSTLDSCTRPLLGLPPRECGDFAQLVRKIPSLGMCFCEENKEEGKWELVNPPVKTLTHGANAAFNWRNWISGN.

One can recognise a UBA domain in the interval 15-60 (KLKSRSSPSLLEPLLAMGFPVHTALKALAATGRKTAEEALAWLHDH). Residues 276–341 (VHYQTLRALF…PENYTDRASE (66 aa)) form the SH3 domain. The segment at 395–661 (RKSVLVVRHG…FNWRNWISGN (267 aa)) is phosphatase-like.

Homodimer or homooligomer. Interacts with CBL. Part of a complex containing CBL and activated EGFR. Interacts with ubiquitin and with mono-ubiquitinated proteins. Interacts with dynamin. Highest expression of UBASH3A in tissues belonging to the immune system, including spleen, peripheral blood leukocytes, thymus and bone marrow.

Its subcellular location is the cytoplasm. The protein resides in the nucleus. In terms of biological role, interferes with CBL-mediated down-regulation and degradation of receptor-type tyrosine kinases. Promotes accumulation of activated target receptors, such as T-cell receptors, EGFR and PDGFRB, on the cell surface. Exhibits negligible protein tyrosine phosphatase activity at neutral pH. May act as a dominant-negative regulator of UBASH3B-dependent dephosphorylation. May inhibit dynamin-dependent endocytic pathways by functionally sequestering dynamin via its SH3 domain. In Homo sapiens (Human), this protein is Ubiquitin-associated and SH3 domain-containing protein A (UBASH3A).